We begin with the raw amino-acid sequence, 422 residues long: 5'-deoxyadenosine deaminase (422 aa).

2 residues coordinate Zn(2+): histidine 57 and histidine 59. Residues glutamate 86 and histidine 178 each contribute to the substrate site. A Zn(2+)-binding site is contributed by histidine 205. Residues glutamate 208 and aspartate 294 each contribute to the substrate site. Aspartate 294 is a Zn(2+) binding site.

Belongs to the metallo-dependent hydrolases superfamily. MTA/SAH deaminase family. In terms of assembly, homotetramer. It depends on Zn(2+) as a cofactor.

The enzyme catalyses 5'-deoxyadenosine + H2O + H(+) = 5'-deoxyinosine + NH4(+). The catalysed reaction is S-adenosyl-L-homocysteine + H2O + H(+) = S-inosyl-L-homocysteine + NH4(+). It carries out the reaction S-methyl-5'-thioadenosine + H2O + H(+) = S-methyl-5'-thioinosine + NH4(+). It catalyses the reaction adenosine + H2O + H(+) = inosine + NH4(+). Its pathway is amino-acid biosynthesis; S-adenosyl-L-methionine biosynthesis. Functionally, catalyzes the deamination of three SAM-derived enzymatic products, namely 5'-deoxyadenosine, S-adenosyl-L-homocysteine, and 5'-methylthioadenosine, to produce the inosine analogs. Can also deaminate adenosine. The preferred substrate for this enzyme is 5'-deoxyadenosine, but all these substrates are efficiently deaminated. Likely functions in a S-adenosyl-L-methionine (SAM) recycling pathway from S-adenosyl-L-homocysteine (SAH) produced from SAM-dependent methylation reactions. May also be involved in the recycling of 5'-deoxyadenosine, whereupon the 5'-deoxyribose moiety of 5'-deoxyinosine is further metabolized to deoxyhexoses used for the biosynthesis of aromatic amino acids in methanogens. The sequence is that of 5'-deoxyadenosine deaminase from Methanococcus vannielii (strain ATCC 35089 / DSM 1224 / JCM 13029 / OCM 148 / SB).